Here is a 411-residue protein sequence, read N- to C-terminus: Carbohydrate sulfotransferase 1 (411 aa).

At 1 to 2 (MQ) the chain is on the cytoplasmic side. A helical; Signal-anchor for type II membrane protein transmembrane segment spans residues 3-23 (CSWKAVLLLALASIAIQYTAI). The Lumenal segment spans residues 24-411 (RTFTAKSFHT…VEERDFRPFL (388 aa)). Asparagine 56 carries N-linked (GlcNAc...) asparagine glycosylation. 69 to 75 (TRSGSSF) lines the 3'-phosphoadenylyl sulfate pocket. N-linked (GlcNAc...) asparagine glycosylation is found at asparagine 145 and asparagine 189. Residue 234 to 242 (RDPRGILAS) participates in 3'-phosphoadenylyl sulfate binding. N-linked (GlcNAc...) asparagine glycosylation is present at asparagine 334. A Cell attachment site motif is present at residues 337 to 339 (RGD).

The protein belongs to the sulfotransferase 1 family. Gal/GlcNAc/GalNAc subfamily. In terms of tissue distribution, broadly expressed with highest levels in central nervous system. Expressed in cortex (at protein level). Expressed in high endothelial venules in peripheral lymph nodes, mesenteric lymph nodes and Peyer's patches.

It localises to the golgi apparatus membrane. It catalyses the reaction 3'-phosphoadenylyl sulfate + keratan = adenosine 3',5'-bisphosphate + keratan 6'-sulfate.. It functions in the pathway glycan metabolism. In terms of biological role, sulfotransferase that utilizes 3'-phospho-5'-adenylyl sulfate (PAPS) as sulfonate donor to catalyze the transfer of sulfate to position 6 of internal galactose (Gal) residues of keratan. Cooperates with B4GALT4 and B3GNT7 glycosyltransferases and CHST6 sulfotransferase to construct and elongate disulfated disaccharide unit [-&gt;3(6-sulfoGalbeta)1-&gt;4(6-sulfoGlcNAcbeta)1-&gt;] within keratan sulfate polymer. Has a preference for sulfating keratan sulfate, but it also transfers sulfate to the unsulfated polymer. Involved in biosynthesis of phosphacan, a major keratan sulfate proteoglycan in the developing brain. Involved in biosynthesis of 6-sulfoGalbeta-containing O-linked glycans in high endothelial venules of lymph nodes. May act in a synergistic manner with CHST4 to generate sialyl 6',6-disulfo Lewis X motif, a recognition determinant for immune cell receptors implicated in leukocyte trafficking. Catalyzes sulfation of N-acetyllactosamine (LacNAc) oligosaccharides with highest efficiency for sialylated LacNAc structures. This chain is Carbohydrate sulfotransferase 1 (Chst1), found in Mus musculus (Mouse).